The chain runs to 113 residues: Probable mesentericin-Y105 immunity protein (113 aa).

Belongs to the immunity protein EntA family.

Imparts immunity to mesentericin-Y105 to naturally sensitive host strains. This Leuconostoc mesenteroides protein is Probable mesentericin-Y105 immunity protein (mesI).